The chain runs to 281 residues: Diaminopimelate epimerase (281 aa).

Substrate-binding residues include Asn-13, Gln-46, and Asn-66. Cys-75 functions as the Proton donor in the catalytic mechanism. Substrate contacts are provided by residues 76–77, Asn-160, Asn-193, and 211–212; these read GN and ER. Residue Cys-220 is the Proton acceptor of the active site. 221 to 222 contacts substrate; that stretch reads GT.

Belongs to the diaminopimelate epimerase family. As to quaternary structure, homodimer.

It is found in the cytoplasm. The enzyme catalyses (2S,6S)-2,6-diaminopimelate = meso-2,6-diaminopimelate. The protein operates within amino-acid biosynthesis; L-lysine biosynthesis via DAP pathway; DL-2,6-diaminopimelate from LL-2,6-diaminopimelate: step 1/1. In terms of biological role, catalyzes the stereoinversion of LL-2,6-diaminopimelate (L,L-DAP) to meso-diaminopimelate (meso-DAP), a precursor of L-lysine and an essential component of the bacterial peptidoglycan. The polypeptide is Diaminopimelate epimerase (Acinetobacter baumannii (strain AB307-0294)).